A 201-amino-acid polypeptide reads, in one-letter code: UPF0301 protein RHECIAT_CH0001061 (201 aa).

Belongs to the UPF0301 (AlgH) family.

The chain is UPF0301 protein RHECIAT_CH0001061 from Rhizobium etli (strain CIAT 652).